Consider the following 569-residue polypeptide: CUE domain-containing protein 5 (569 aa).

The 44-residue stretch at 17–60 folds into the CUE domain; sequence MAEKARATLKEAFPNTDDAIIRAVLAASGYKLEPAFNALLGLSD. Disordered regions lie at residues 67-139, 175-275, and 311-569; these read MEQA…DDYS, DGEE…SSSA, and EELE…GKET. Positions 79–100 are enriched in basic and acidic residues; sequence AAHDDPVQRQLEEDERCARELA. Residues 104–113 are compositionally biased toward basic residues; the sequence is NSHRPERRRK. Over residues 234–249 the composition is skewed to basic and acidic residues; sequence SDPHMLNEKDFERLRL. Residues 250–274 show a composition bias toward low complexity; sequence ESSSSPMMRRSSLNSNRRSVESSSS. Residues 329–340 are compositionally biased toward basic and acidic residues; the sequence is VVVEKKPDESRK. A compositionally biased stretch (polar residues) spans 347 to 364; the sequence is ETVSEEQMGSSNAKSKVL. Basic and acidic residues-rich tracts occupy residues 367–381, 399–500, and 507–558; these read EPKD…KTET, ISEK…KETD, and KEEK…KIEE.

The protein localises to the cytoplasm. The protein is CUE domain-containing protein 5 of Schizosaccharomyces pombe (strain 972 / ATCC 24843) (Fission yeast).